The following is a 486-amino-acid chain: Ribosomal RNA small subunit methyltransferase F (486 aa).

S-adenosyl-L-methionine-binding positions include 124-130, Glu-148, Asp-175, and Asp-193; that span reads ASAPGSK. Cys-246 acts as the Nucleophile in catalysis.

It belongs to the class I-like SAM-binding methyltransferase superfamily. RsmB/NOP family.

The protein localises to the cytoplasm. The catalysed reaction is cytidine(1407) in 16S rRNA + S-adenosyl-L-methionine = 5-methylcytidine(1407) in 16S rRNA + S-adenosyl-L-homocysteine + H(+). Specifically methylates the cytosine at position 1407 (m5C1407) of 16S rRNA. The sequence is that of Ribosomal RNA small subunit methyltransferase F from Shewanella baltica (strain OS223).